The sequence spans 1453 residues: MEDDCEELQVPVGTLTSIGFSISNNNDRDKMSVLEVEAPNQVTDSRLGLPNPDSVCRTCGSKDRKVCEGHFGVINFAYSIINPYFLKEVAALLNKICPGCKYIRKKQFQITEDQPERCRYCTLNTGYPLMKFRVTTKEVFRRSGIVVEVNEESLMKLKKRGVLTLPPDYWSFLPQDSNIDESCLKPTRRIITHAQVYALLLGIDQRLIKKDIPMFNSLGLTSFPVTPNGYRVTEIVHQFNGARLIFDERTRIYKKLVGFEGNTLELSSRVMECMQYSRLFSETVSSSKDSANPYQKKSDTPKLCGLRFMKDVLLGKRSDHTFRTVVVGDPSLKLNEIGIPESIAKRLQVSEHLNQCNKERLVTSFVPTLLDNKEMHVRRGDRLVAIQVNDLQTGDKIFRSLMDGDTVLMNRPPSIHQHSLIAMTVRILPTTSVVSLNPICCLPFRGDFDGDCLHGYVPQSIQAKVELDELVALDKQLINRQNGRNLLSLGQDSLTAAYLVNVEKNCYLNRAQMQQLQMYCPFQLPPPAIIKASPSSTEPQWTGMQLFGMLFPPGFDYTYPLNNVVVSNGELLSFSEGSAWLRDGEGNFIERLLKHDKGKVLDIIYSAQEMLSQWLLMRGLSVSLADLYLSSDLQSRKNLTEEISYGLREAEQVCNKQQLMVESWRDFLAVNGEDKEEDSVSDLARFCYERQKSATLSELAVSAFKDAYRDVQALAYRYGDQSNSFLIMSKAGSKGNIGKLVQHSMCIGLQNSAVSLSFGFPRELTCAAWNDPNSPLRGAKGKDSTTTESYVPYGVIENSFLTGLNPLESFVHSVTSRDSSFSGNADLPGTLSRRLMFFMRDIYAAYDGTVRNSFGNQLVQFTYETDGPVEDITGEALGSLSACALSEAAYSALDQPISLLETSPLLNLKNVLECGSKKGQREQTMSLYLSEYLSKKKHGFEYGSLEIKNHLEKLSFSEIVSTSMIIFSPSSNTKVPLSPWVCHFHISEKVLKRKQLSAESVVSSLNEQYKSRNRELKLDIVDLDIQNTNHCSSDDQAMKDDNVCITVTVVEASKHSVLELDAIRLVLIPFLLDSPVKGDQGIKKVNILWTDRPKAPKRNGNHLAGELYLKVTMYGDRGKRNCWTALLETCLPIMDMIDWGRSHPDNIRQCCSVYGIDAGRSIFVANLESAVSDTGKEILREHLLLVADSLSVTGEFVALNAKGWSKQRQVESTPAPFTQACFSSPSQCFLKAAKEGVRDDLQGSIDALAWGKVPGFGTGDQFEIIISPKVHGFTTPVDVYDLLSSTKTMRRTNSAPKSDKATVQPFGLLHSAFLKDIKVLDGKGIPMSLLRTIFTWKNIELLSQSLKRILHSYEINELLNERDEGLVKMVLQLHPNSVEKIGPGVKGIRVAKSKHGDSCCFEVVRIDGTFEDFSYHKCVLGATKIIAPKKMNFYKSKYLKNGTLESGGFSENP.

Zn(2+) is bound by residues cysteine 56, cysteine 59, cysteine 67, histidine 70, cysteine 97, cysteine 100, and cysteine 121. Aspartate 447, aspartate 449, and aspartate 451 together coordinate Mg(2+). Positions 806–818 (PLESFVHSVTSRD) are bridging helix.

The protein belongs to the RNA polymerase beta' chain family. As to quaternary structure, component of the RNA polymerase IV complex. Interacts with NRPD2, NRPD3, NRPD3B, NRPD4, NRPD5, NRPD5B, NRPD6A, NRPD7, NRPD7B, NRPD9A, NRPD9B, NRPD10, NRPD11, NRPD12, RDR2, RDM4, CLSY1, CLSY2, CLSY3, CLSY4 and SHH1. As to expression, mostly expressed in flowers, and, to a lower extent, in leaves.

The protein resides in the nucleus. The catalysed reaction is RNA(n) + a ribonucleoside 5'-triphosphate = RNA(n+1) + diphosphate. Functionally, DNA-dependent RNA polymerase catalyzes the transcription of DNA into RNA using the four ribonucleoside triphosphates as substrates. Largest and catalytic component of RNA polymerase IV which mediates 24-nt short-interfering RNAs (siRNA) accumulation. Implicated in siRNA-directed heterochromatin formation through the action of DCL3 and AGO4, and subsequent DNA methylation-dependent silencing of targeted sequences. Essential component of a self-reinforcing loop coupling de novo DNA methylation to siRNA production. Required for intercellular but not intracellular RNA interference (RNAi) leading to systemic post-transcriptional gene silencing. Involved in the maintenance of post-transcriptional RNA silencing. The sequence is that of DNA-directed RNA polymerase IV subunit 1 (NRPD1) from Arabidopsis thaliana (Mouse-ear cress).